We begin with the raw amino-acid sequence, 214 residues long: ATP-dependent Clp protease proteolytic subunit 2 (214 aa).

The active-site Nucleophile is Ser110. His135 is a catalytic residue.

This sequence belongs to the peptidase S14 family. As to quaternary structure, fourteen ClpP subunits assemble into 2 heptameric rings which stack back to back to give a disk-like structure with a central cavity, resembling the structure of eukaryotic proteasomes.

Its subcellular location is the cytoplasm. It catalyses the reaction Hydrolysis of proteins to small peptides in the presence of ATP and magnesium. alpha-casein is the usual test substrate. In the absence of ATP, only oligopeptides shorter than five residues are hydrolyzed (such as succinyl-Leu-Tyr-|-NHMec, and Leu-Tyr-Leu-|-Tyr-Trp, in which cleavage of the -Tyr-|-Leu- and -Tyr-|-Trp bonds also occurs).. In terms of biological role, cleaves peptides in various proteins in a process that requires ATP hydrolysis. Has a chymotrypsin-like activity. Plays a major role in the degradation of misfolded proteins. The polypeptide is ATP-dependent Clp protease proteolytic subunit 2 (Mycobacterium leprae (strain TN)).